Reading from the N-terminus, the 61-residue chain is Small ribosomal subunit protein uS14 (61 aa).

4 residues coordinate Zn(2+): Cys24, Cys27, Cys40, and Cys43.

Belongs to the universal ribosomal protein uS14 family. Zinc-binding uS14 subfamily. Part of the 30S ribosomal subunit. Contacts proteins S3 and S10. Zn(2+) is required as a cofactor.

In terms of biological role, binds 16S rRNA, required for the assembly of 30S particles and may also be responsible for determining the conformation of the 16S rRNA at the A site. This chain is Small ribosomal subunit protein uS14, found in Dictyoglomus thermophilum (strain ATCC 35947 / DSM 3960 / H-6-12).